The chain runs to 435 residues: ATP-dependent RNA helicase RhlB (435 aa).

The Q motif motif lies at 9-37; that stretch reads QKFADLGLNPQVVEGLEKKGFEFCTPIQA. The Helicase ATP-binding domain maps to 40-219; the sequence is LPVLLSGQDI…FEHMHNPEHV (180 aa). ATP is bound at residue 53–60; the sequence is AQTGTGKT. Residues 165–168 carry the DEAD box motif; that stretch reads DEAD. The Helicase C-terminal domain occupies 245–390; it reads ALLQTLIEEE…VSDYDSSALI (146 aa). Residues 395–435 form a disordered region; the sequence is APVRTPSARNQQRRTNTGGARSGDRKSNNRRPRQPRQHKEA. Polar residues predominate over residues 401–413; sequence SARNQQRRTNTGG. Basic residues predominate over residues 422 to 435; that stretch reads NNRRPRQPRQHKEA.

It belongs to the DEAD box helicase family. RhlB subfamily. Component of the RNA degradosome, which is a multiprotein complex involved in RNA processing and mRNA degradation.

The protein localises to the cytoplasm. It carries out the reaction ATP + H2O = ADP + phosphate + H(+). Its function is as follows. DEAD-box RNA helicase involved in RNA degradation. Has RNA-dependent ATPase activity and unwinds double-stranded RNA. This is ATP-dependent RNA helicase RhlB from Vibrio vulnificus (strain YJ016).